A 101-amino-acid polypeptide reads, in one-letter code: Small ribosomal subunit protein uS14A (101 aa).

The segment at 32–71 (RRPGTPEPERNRAVEELRRQPRDASATRVRNRDSVDGRPR) is disordered. Composition is skewed to basic and acidic residues over residues 38–53 (EPERNRAVEELRRQPR) and 61–70 (RNRDSVDGRP).

It belongs to the universal ribosomal protein uS14 family. Part of the 30S ribosomal subunit. Contacts proteins S3 and S10.

Its function is as follows. Binds 16S rRNA, required for the assembly of 30S particles and may also be responsible for determining the conformation of the 16S rRNA at the A site. The protein is Small ribosomal subunit protein uS14A of Streptomyces griseus subsp. griseus (strain JCM 4626 / CBS 651.72 / NBRC 13350 / KCC S-0626 / ISP 5235).